The following is a 344-amino-acid chain: C-C chemokine receptor-like 2 (344 aa).

At 1–43 (MANYTLAPEDEYDVLIEGELESDEAEQCDKYDAQALSAQLVPS) the chain is on the extracellular side. N-linked (GlcNAc...) asparagine glycosylation occurs at Asn-3. A helical membrane pass occupies residues 44–64 (LCSAVFVIGVLDNLLVVLILV). The Cytoplasmic segment spans residues 65 to 74 (KYKGLKRVEN). The chain crosses the membrane as a helical span at residues 75–95 (IYLLNLAVSNLCFLLTLPFWA). The Extracellular segment spans residues 96-104 (HAGGDPMCK). The cysteines at positions 103 and 181 are disulfide-linked. Residues 105 to 125 (ILIGLYFVGLYSETFFNCLLT) form a helical membrane-spanning segment. Topologically, residues 126–144 (VQRYLVFLHKGNFFSARRR) are cytoplasmic. A helical membrane pass occupies residues 145–165 (VPCGIITSVLAWVTAILATLP). Topologically, residues 166–198 (EFVVYKPQMEDQKYKCAFSRTPFLPADETFWKH) are extracellular. The chain crosses the membrane as a helical span at residues 199-219 (FLTLKMNISVLVLPLFIFTFL). The Cytoplasmic portion of the chain corresponds to 220 to 238 (YVQMRKTLRFREQRYSLFK). Residues 239 to 259 (LVFAIMVVFLLMWAPYNIAFF) traverse the membrane as a helical segment. Residues 260–286 (LSTFKEHFSLSDCKSSYNLDKSVHITK) are Extracellular-facing. A helical membrane pass occupies residues 287-307 (LIATTHCCINPLLYAFLDGTF). At 308–344 (SKYLCRCFHLRSNTPLQPRGQSAQGTSREEPDHSTEV) the chain is on the cytoplasmic side. Polar residues predominate over residues 324 to 333 (QPRGQSAQGT). The disordered stretch occupies residues 324–344 (QPRGQSAQGTSREEPDHSTEV). Positions 334–344 (SREEPDHSTEV) are enriched in basic and acidic residues.

This sequence belongs to the G-protein coupled receptor 1 family. As to expression, expressed abundantly in immunal tissues such as spleen, fetal liver, lymph node and bone marrow. Strong expression also in lung and heart. Expressed in almost all hematopoietic cells including monocytes, macrophages, PMNs, T-cells (both CD4+ and CD8+), monocyte-derived iDCs, NK cells, and CD34+ progenitor cells. B-cells expressed isoform 1 but not isoform 2. Up-regulated on synovial neutrophils of rheumatoid arthritis patients.

It localises to the cell membrane. In terms of biological role, receptor for CCL19 and chemerin/RARRES2. Does not appear to be a signaling receptor, but may have a role in modulating chemokine-triggered immune responses by capturing and internalizing CCL19 or by presenting RARRES2 ligand to CMKLR1, a functional signaling receptors. Plays a critical role for the development of Th2 responses. This is C-C chemokine receptor-like 2 (CCRL2) from Homo sapiens (Human).